We begin with the raw amino-acid sequence, 125 residues long: 14 kDa phosphohistidine phosphatase (125 aa).

Position 2 is an N-acetylalanine (A2). K21 provides a ligand contact to substrate. H53 acts as the Proton acceptor in catalysis. 94–96 (SMG) provides a ligand contact to substrate.

As to quaternary structure, monomer.

It is found in the cytoplasm. It catalyses the reaction N(pros)-phospho-L-histidyl-[protein] + H2O = L-histidyl-[protein] + phosphate. The enzyme catalyses N(tele)-phospho-L-histidyl-[protein] + H2O = L-histidyl-[protein] + phosphate. In terms of biological role, exhibits phosphohistidine phosphatase activity. Its function is as follows. May have a significant involvement in neuronal signaling. This chain is 14 kDa phosphohistidine phosphatase (PHPT1), found in Oryctolagus cuniculus (Rabbit).